A 586-amino-acid polypeptide reads, in one-letter code: Succinate dehydrogenase flavoprotein subunit (586 aa).

FAD is bound by residues 10-15 (GGGLAG) and 33-48 (SIVPVKRSHSVCAQGG). Position 41 is a tele-8alpha-FAD histidine (His41). The substrate site is built by His236 and Ser250. Arg285 acts as the Proton acceptor in catalysis. Residue His352 participates in substrate binding. Glu376 serves as a coordination point for FAD. Substrate is bound at residue Arg386. 391–392 (SL) is a binding site for FAD.

This sequence belongs to the FAD-dependent oxidoreductase 2 family. FRD/SDH subfamily. In terms of assembly, in B.subtilis succinate dehydrogenase forms part of an enzyme complex containing three subunits: a flavoprotein, an iron-sulfur protein and cytochrome b-558. Interacts with FloT. FAD is required as a cofactor.

Its subcellular location is the cell membrane. The protein resides in the membrane raft. The catalysed reaction is a quinone + succinate = fumarate + a quinol. The protein operates within carbohydrate metabolism; tricarboxylic acid cycle; fumarate from succinate (bacterial route): step 1/1. This chain is Succinate dehydrogenase flavoprotein subunit (sdhA), found in Bacillus subtilis (strain 168).